Consider the following 293-residue polypeptide: MADDAGAAGGPGGPGGPGMGNRGGFRGGFGSGIRGRGRGRGRGRGRGRGARGGKAEDKEWMPVTKLGRLVKDMKIKSLEEIYLFSLPIKESEIIDFFLGASLKDEVLKIMPVQKQTRAGQRTRFKAFVAIGDYNGHVGLGVKCSKEVATAIRGAIILAKLSIVPVRRGYWGNKIGKPHTVPCKVTGRCGSVLVRLIPAPRGTGIVSAPVPKKLLMMAGIDDCYTSARGCTATLGNFAKATFDAISKTYSYLTPDLWKETVFTKSPYQEFTDHLVKTHTRVSVQRTQAPAVATT.

Residues 1–56 form a disordered region; the sequence is MADDAGAAGGPGGPGGPGMGNRGGFRGGFGSGIRGRGRGRGRGRGRGRGARGGKAE. Residue alanine 2 is modified to N-acetylalanine. Over residues 7 to 34 the composition is skewed to gly residues; that stretch reads AAGGPGGPGGPGMGNRGGFRGGFGSGIR. Basic residues predominate over residues 35–51; it reads GRGRGRGRGRGRGRGAR. Residues lysine 54 and lysine 58 each participate in a glycyl lysine isopeptide (Lys-Gly) (interchain with G-Cter in ubiquitin) cross-link. In terms of domain architecture, S5 DRBM spans 102–165; sequence LKDEVLKIMP…ILAKLSIVPV (64 aa). Residue threonine 252 is modified to Phosphothreonine. At lysine 263 the chain carries N6-acetyllysine. Phosphoserine is present on serine 264. Threonine 270 is modified (phosphothreonine). Lysine 275 carries the N6-acetyllysine; alternate modification. A Glycyl lysine isopeptide (Lys-Gly) (interchain with G-Cter in SUMO1); alternate cross-link involves residue lysine 275. Residue lysine 275 forms a Glycyl lysine isopeptide (Lys-Gly) (interchain with G-Cter in SUMO2); alternate linkage. Residue lysine 275 forms a Glycyl lysine isopeptide (Lys-Gly) (interchain with G-Cter in ubiquitin); alternate linkage. A Phosphoserine modification is found at serine 281.

This sequence belongs to the universal ribosomal protein uS5 family. In terms of assembly, component of the small ribosomal subunit. Interacts with zinc finger protein ZNF277 (via zinc-finger domains); the interaction is direct; the interaction is extra-ribosomal. Interaction with ZNF277 competes with the binding of RPS2 to protein arginine methyltransferase PRMT3. Citrullinated by PADI4 in the Arg/Gly-rich region. In terms of processing, asymmetric arginine dimethylation by PRMT3 occurs at multiple sites in the Arg/Gly-rich region. Post-translationally, monoubiquitinated at Lys-54 and Lys-58 by RNF10 when a ribosome has stalled during translation, leading to its degradation by the proteasome. Deubiquitinated at Lys-54 and Lys-58 by USP10, preventing degradation by the proteasome and promoting 40S ribosome subunit recycling following ribosome dissociation.

The protein resides in the cytoplasm. It localises to the nucleus. It is found in the nucleolus. Its function is as follows. Component of the ribosome, a large ribonucleoprotein complex responsible for the synthesis of proteins in the cell. The small ribosomal subunit (SSU) binds messenger RNAs (mRNAs) and translates the encoded message by selecting cognate aminoacyl-transfer RNA (tRNA) molecules. The large subunit (LSU) contains the ribosomal catalytic site termed the peptidyl transferase center (PTC), which catalyzes the formation of peptide bonds, thereby polymerizing the amino acids delivered by tRNAs into a polypeptide chain. The nascent polypeptides leave the ribosome through a tunnel in the LSU and interact with protein factors that function in enzymatic processing, targeting, and the membrane insertion of nascent chains at the exit of the ribosomal tunnel. Plays a role in the assembly and function of the 40S ribosomal subunit. Mutations in this protein affects the control of translational fidelity. Involved in nucleolar processing of pre-18S ribosomal RNA and ribosome assembly. The sequence is that of Small ribosomal subunit protein uS5 (RPS2) from Homo sapiens (Human).